The following is a 196-amino-acid chain: Small ribosomal subunit protein uS4c (196 aa).

The disordered stretch occupies residues 17–38 (ALPGLTRKTPKSRSNLKKKFHS). A compositionally biased stretch (basic residues) spans 24–38 (KTPKSRSNLKKKFHS). Positions 89–169 (MRLDNILFRL…LPKHLTIDTL (81 aa)) constitute an S4 RNA-binding domain.

This sequence belongs to the universal ribosomal protein uS4 family. Part of the 30S ribosomal subunit. Contacts protein S5. The interaction surface between S4 and S5 is involved in control of translational fidelity.

It is found in the plastid. The protein resides in the chloroplast. In terms of biological role, one of the primary rRNA binding proteins, it binds directly to 16S rRNA where it nucleates assembly of the body of the 30S subunit. With S5 and S12 plays an important role in translational accuracy. The protein is Small ribosomal subunit protein uS4c (rps4) of Lygeum spartum.